The following is a 98-amino-acid chain: NADH-ubiquinone oxidoreductase chain 4L (98 aa).

The next 3 membrane-spanning stretches (helical) occupy residues 1-21 (MSLV…GLLM), 29-49 (ALLC…LTIL), and 61-81 (IILL…LVMV).

The protein belongs to the complex I subunit 4L family. In terms of assembly, core subunit of respiratory chain NADH dehydrogenase (Complex I) which is composed of 45 different subunits.

The protein localises to the mitochondrion inner membrane. It carries out the reaction a ubiquinone + NADH + 5 H(+)(in) = a ubiquinol + NAD(+) + 4 H(+)(out). Core subunit of the mitochondrial membrane respiratory chain NADH dehydrogenase (Complex I) which catalyzes electron transfer from NADH through the respiratory chain, using ubiquinone as an electron acceptor. Part of the enzyme membrane arm which is embedded in the lipid bilayer and involved in proton translocation. This Lagenorhynchus albirostris (White-beaked dolphin) protein is NADH-ubiquinone oxidoreductase chain 4L (MT-ND4L).